The primary structure comprises 256 residues: Small ribosomal subunit protein eS1 (256 aa).

Basic residues predominate over residues 1–18 (MAVGKNKRLSKGKKGLKK). A disordered region spans residues 1-22 (MAVGKNKRLSKGKKGLKKKTQD). Ala-2 bears the N-acetylalanine; partial mark.

This sequence belongs to the eukaryotic ribosomal protein eS1 family. As to quaternary structure, component of the small ribosomal subunit (SSU). Mature N.crassa ribosomes consist of a small (40S) and a large (60S) subunit. The 40S small subunit contains 1 molecule of ribosomal RNA (18S rRNA) and at least 32 different proteins. The large 60S subunit contains 3 rRNA molecules (26S, 5.8S and 5S rRNA) and at least 42 different proteins.

Its subcellular location is the cytoplasm. Component of the ribosome, a large ribonucleoprotein complex responsible for the synthesis of proteins in the cell. The small ribosomal subunit (SSU) binds messenger RNAs (mRNAs) and translates the encoded message by selecting cognate aminoacyl-transfer RNA (tRNA) molecules. The large subunit (LSU) contains the ribosomal catalytic site termed the peptidyl transferase center (PTC), which catalyzes the formation of peptide bonds, thereby polymerizing the amino acids delivered by tRNAs into a polypeptide chain. The nascent polypeptides leave the ribosome through a tunnel in the LSU and interact with protein factors that function in enzymatic processing, targeting, and the membrane insertion of nascent chains at the exit of the ribosomal tunnel. This is Small ribosomal subunit protein eS1 (rps1) from Neurospora crassa (strain ATCC 24698 / 74-OR23-1A / CBS 708.71 / DSM 1257 / FGSC 987).